The chain runs to 414 residues: Zinc metalloproteinase-disintegrin-like batroxstatin-3 (414 aa).

N-linked (GlcNAc...) asparagine glycosylation is found at N7 and N70. Residues 10–204 (KYIKLVIVAD…HTPQCILNEP (195 aa)) form the Peptidase M12B domain. Disulfide bonds link C121–C199, C161–C183, and C163–C168. H146 serves as a coordination point for Zn(2+). The active site involves E147. 2 residues coordinate Zn(2+): H150 and H156. The 87-residue stretch at 212–298 (PEVCGNYLLE…HCPTDRFHRN (87 aa)) folds into the Disintegrin domain. Ca(2+) is bound by residues V214, N217, E221, E224, and D227. 14 cysteine pairs are disulfide-bonded: C215–C244, C226–C239, C228–C234, C238–C261, C252–C258, C257–C283, C270–C290, C277–C309, C302–C314, C321–C371, C336–C381, C349–C359, C366–C403, and C397–C408. A D/ECD-tripeptide motif is present at residues 276 to 278 (ECD). D278, E281, D293, and R294 together coordinate Ca(2+).

The protein belongs to the venom metalloproteinase (M12B) family. P-III subfamily. P-IIIa sub-subfamily. As to quaternary structure, monomer. The cofactor is Zn(2+). In terms of tissue distribution, expressed by the venom gland.

It is found in the secreted. Snake venom zinc metalloprotease that induces apoptosis in vascular endothelial cells (VEC), without degrading the extracellular matrix (it cannot cleave collagen) or inhibiting adhesion of VEC. Has also fibrinogenolytic and hemorrhagic activities. The chain is Zinc metalloproteinase-disintegrin-like batroxstatin-3 from Bothrops atrox (Barba amarilla).